Here is a 376-residue protein sequence, read N- to C-terminus: Transforming growth factor beta-1 proprotein (376 aa).

The first 22 residues, 1–22 (MRVESLLLALQCLLGFVHYSGA), serve as a signal peptide directing secretion. The segment at 23 to 68 (LSTCSPLDLELIKRKRIEAIRGQILSKLRLSKEPEVDEEKESQNIP) is straightjacket domain. The interval 69 to 258 (AELISVYNST…SLPLDGNNSS (190 aa)) is arm domain. Asn-76, Asn-125, and Asn-167 each carry an N-linked (GlcNAc...) asparagine glycan. Residues 214–238 (DPQKTFQLKIPGLVLVRGDTETLAV) form a bowtie tail region. A Cell attachment site motif is present at residues 230–232 (RGD). Disulfide bonds link Cys-272-Cys-280, Cys-308-Cys-373, and Cys-312-Cys-375.

This sequence belongs to the TGF-beta family. In terms of assembly, latency-associated peptide: Homodimer; disulfide-linked. Latency-associated peptide: Interacts with Transforming growth factor beta-1 (TGF-beta-1) chain; interaction is non-covalent and maintains (TGF-beta-1) in a latent state; each Latency-associated peptide (LAP) monomer interacts with TGF-beta-1 in the other monomer. Transforming growth factor beta-1: Homodimer; disulfide-linked. Transforming growth factor beta-1: Interacts with TGF-beta receptors (tgfbr1 and tgfbr2), leading to signal transduction. Interacts with EFEMP2. In terms of processing, transforming growth factor beta-1 proprotein: The precursor proprotein is cleaved in the Golgi apparatus to form Transforming growth factor beta-1 (TGF-beta-1) and Latency-associated peptide (LAP) chains, which remain non-covalently linked, rendering TGF-beta-1 inactive.

Its subcellular location is the secreted. It localises to the extracellular space. The protein resides in the extracellular matrix. Transforming growth factor beta-1 proprotein: Precursor of the Latency-associated peptide (LAP) and Transforming growth factor beta-1 (TGF-beta-1) chains, which constitute the regulatory and active subunit of TGF-beta-1, respectively. Functionally, required to maintain the Transforming growth factor beta-1 (TGF-beta-1) chain in a latent state during storage in extracellular matrix. Associates non-covalently with TGF-beta-1 and regulates its activation via interaction with 'milieu molecules', such as LTBP1, LRRC32/GARP and LRRC33/NRROS, that control activation of TGF-beta-1. Interaction with integrins (ITGAV:ITGB6 or ITGAV:ITGB8) results in distortion of the Latency-associated peptide chain and subsequent release of the active TGF-beta-1. Its function is as follows. Transforming growth factor beta-1: Multifunctional protein that regulates the growth and differentiation of various cell types and is involved in various processes, such as normal development, immune function, microglia function and responses to neurodegeneration. Activation into mature form follows different steps: following cleavage of the proprotein in the Golgi apparatus, Latency-associated peptide (LAP) and Transforming growth factor beta-1 (TGF-beta-1) chains remain non-covalently linked rendering TGF-beta-1 inactive during storage in extracellular matrix. At the same time, LAP chain interacts with 'milieu molecules', such as ltbp1, lrrc32/garp and lrrc33/nrros that control activation of TGF-beta-1 and maintain it in a latent state during storage in extracellular milieus. TGF-beta-1 is released from LAP by integrins (ITGAV:ITGB6 or ITGAV:ITGB8): integrin-binding to LAP stabilizes an alternative conformation of the LAP bowtie tail and results in distortion of the LAP chain and subsequent release of the active TGF-beta-1. Once activated following release of LAP, TGF-beta-1 acts by binding to TGF-beta receptors (tgfbr1 and tgfbr2), which transduce signal. While expressed by many cells types, TGF-beta-1 only has a very localized range of action within cell environment thanks to fine regulation of its activation by Latency-associated peptide chain (LAP) and 'milieu molecules'. Plays an important role in bone remodeling: acts as a potent stimulator of osteoblastic bone formation. Can promote either T-helper 17 cells (Th17) or regulatory T-cells (Treg) lineage differentiation in a concentration-dependent manner. Can induce epithelial-to-mesenchymal transition (EMT) and cell migration in various cell types. This Cyprinus carpio (Common carp) protein is Transforming growth factor beta-1 proprotein (tgfb1).